Consider the following 146-residue polypeptide: Ribonuclease H (146 aa).

Residues 1 to 143 form the RNase H type-1 domain; that stretch reads MQKKITIYTD…CDELARQAIQ (143 aa). Residues Asp10, Glu48, Asp70, and Asp135 each coordinate Mg(2+).

This sequence belongs to the RNase H family. Monomer. Mg(2+) serves as cofactor.

The protein localises to the cytoplasm. It catalyses the reaction Endonucleolytic cleavage to 5'-phosphomonoester.. Functionally, endonuclease that specifically degrades the RNA of RNA-DNA hybrids. The protein is Ribonuclease H of Chlorobium luteolum (strain DSM 273 / BCRC 81028 / 2530) (Pelodictyon luteolum).